A 141-amino-acid polypeptide reads, in one-letter code: MAIERTLSIIKPDAVAKNVIGQIYARFEAAGLKIAAARMIHLSRAEAEQFYAVHKERPFFKDLVDFMISGPVMVQALEGENAVLKNRELMGATDPKKAAPGTIRADFADSIDANAVHGSDAAETAQVEVAFFFPGLNIYSR.

ATP-binding residues include K11, F59, R87, T93, R104, and N114. Catalysis depends on H117, which acts as the Pros-phosphohistidine intermediate.

The protein belongs to the NDK family. In terms of assembly, homotetramer. Mg(2+) serves as cofactor.

The protein localises to the cytoplasm. It catalyses the reaction a 2'-deoxyribonucleoside 5'-diphosphate + ATP = a 2'-deoxyribonucleoside 5'-triphosphate + ADP. The catalysed reaction is a ribonucleoside 5'-diphosphate + ATP = a ribonucleoside 5'-triphosphate + ADP. Its function is as follows. Major role in the synthesis of nucleoside triphosphates other than ATP. The ATP gamma phosphate is transferred to the NDP beta phosphate via a ping-pong mechanism, using a phosphorylated active-site intermediate. This is Nucleoside diphosphate kinase from Acidovorax sp. (strain JS42).